The chain runs to 213 residues: Pyrrolidone-carboxylate peptidase (213 aa).

Residues Glu-78, Cys-141, and His-165 contribute to the active site.

Belongs to the peptidase C15 family. Homotetramer.

The protein localises to the cytoplasm. It catalyses the reaction Release of an N-terminal pyroglutamyl group from a polypeptide, the second amino acid generally not being Pro.. Removes 5-oxoproline from various penultimate amino acid residues except L-proline. The chain is Pyrrolidone-carboxylate peptidase from Clostridium perfringens (strain SM101 / Type A).